Here is a 341-residue protein sequence, read N- to C-terminus: Uroporphyrinogen decarboxylase (341 aa).

Substrate-binding positions include R25 to R29, F44, D74, Y151, S206, and H318.

This sequence belongs to the uroporphyrinogen decarboxylase family. In terms of assembly, homodimer.

It localises to the cytoplasm. It catalyses the reaction uroporphyrinogen III + 4 H(+) = coproporphyrinogen III + 4 CO2. It functions in the pathway porphyrin-containing compound metabolism; protoporphyrin-IX biosynthesis; coproporphyrinogen-III from 5-aminolevulinate: step 4/4. Catalyzes the decarboxylation of four acetate groups of uroporphyrinogen-III to yield coproporphyrinogen-III. The sequence is that of Uroporphyrinogen decarboxylase from Christiangramia forsetii (strain DSM 17595 / CGMCC 1.15422 / KT0803) (Gramella forsetii).